The sequence spans 339 residues: 4-hydroxy-2-oxovalerate aldolase (339 aa).

In terms of domain architecture, Pyruvate carboxyltransferase spans 7–259 (VILHDMSLRD…QSGIDLYKIM (253 aa)). 15–16 (RD) contacts substrate. D16 contacts Mn(2+). Residue H19 is the Proton acceptor of the active site. 2 residues coordinate substrate: S169 and H198. H198 and H200 together coordinate Mn(2+). A substrate-binding site is contributed by Y289.

The protein belongs to the 4-hydroxy-2-oxovalerate aldolase family.

It carries out the reaction (S)-4-hydroxy-2-oxopentanoate = acetaldehyde + pyruvate. The protein is 4-hydroxy-2-oxovalerate aldolase of Marinomonas sp. (strain MWYL1).